The following is a 440-amino-acid chain: Acetylornithine deacetylase (440 aa).

Position 101 (His101) interacts with Zn(2+). Residue Asp103 is part of the active site. Asp133 contacts Zn(2+). The Proton acceptor role is filled by Glu167. 2 residues coordinate Zn(2+): Glu168 and His412.

This sequence belongs to the peptidase M20A family. ArgE subfamily. In terms of assembly, homodimer. Zn(2+) serves as cofactor. The cofactor is Co(2+).

The catalysed reaction is N(2)-acetyl-L-ornithine + H2O = L-ornithine + acetate. The protein operates within amino-acid biosynthesis; L-arginine biosynthesis; L-ornithine from N(2)-acetyl-L-ornithine (linear): step 1/1. This Arabidopsis thaliana (Mouse-ear cress) protein is Acetylornithine deacetylase.